Here is a 135-residue protein sequence, read N- to C-terminus: Small ribosomal subunit protein uS12c (135 aa).

Belongs to the universal ribosomal protein uS12 family. As to quaternary structure, part of the 30S ribosomal subunit.

Its subcellular location is the plastid. It is found in the chloroplast. Functionally, with S4 and S5 plays an important role in translational accuracy. Located at the interface of the 30S and 50S subunits. The chain is Small ribosomal subunit protein uS12c (rps12) from Adiantum capillus-veneris (Maidenhair fern).